We begin with the raw amino-acid sequence, 594 residues long: Aspartate--tRNA(Asp/Asn) ligase (594 aa).

An L-aspartate-binding site is contributed by Glu173. The segment at 197–200 (QLFK) is aspartate. Arg219 contacts L-aspartate. ATP is bound by residues 219–221 (RDE) and Gln228. His449 lines the L-aspartate pocket. Residue Glu482 participates in ATP binding. Arg489 lines the L-aspartate pocket. 534 to 537 (GLDR) lines the ATP pocket.

Belongs to the class-II aminoacyl-tRNA synthetase family. Type 1 subfamily. As to quaternary structure, homodimer.

It localises to the cytoplasm. It catalyses the reaction tRNA(Asx) + L-aspartate + ATP = L-aspartyl-tRNA(Asx) + AMP + diphosphate. Aspartyl-tRNA synthetase with relaxed tRNA specificity since it is able to aspartylate not only its cognate tRNA(Asp) but also tRNA(Asn). Reaction proceeds in two steps: L-aspartate is first activated by ATP to form Asp-AMP and then transferred to the acceptor end of tRNA(Asp/Asn). The protein is Aspartate--tRNA(Asp/Asn) ligase of Saccharophagus degradans (strain 2-40 / ATCC 43961 / DSM 17024).